The following is a 469-amino-acid chain: 2-oxoisovalerate dehydrogenase subunit beta, mitochondrial (469 aa).

A mitochondrion-targeting transit peptide spans 1-40 (MKRSTVVIRPSARALSRQASSQSFLLARSSALTSRQRRLY). Tyr167 serves as a coordination point for thiamine diphosphate. 3 residues coordinate K(+): Gly194, Leu196, and Thr197.

Heterotetramer of 2 alpha and 2 beta chains. The cofactor is thiamine diphosphate.

It is found in the mitochondrion matrix. It carries out the reaction N(6)-[(R)-lipoyl]-L-lysyl-[protein] + 3-methyl-2-oxobutanoate + H(+) = N(6)-[(R)-S(8)-2-methylpropanoyldihydrolipoyl]-L-lysyl-[protein] + CO2. The branched-chain alpha-keto dehydrogenase complex catalyzes the overall conversion of alpha-keto acids to acyl-CoA and CO(2). It contains multiple copies of three enzymatic components: branched-chain alpha-keto acid decarboxylase (E1), lipoamide acyltransferase (E2) and lipoamide dehydrogenase (E3). In Chaetomium thermophilum (strain DSM 1495 / CBS 144.50 / IMI 039719) (Thermochaetoides thermophila), this protein is 2-oxoisovalerate dehydrogenase subunit beta, mitochondrial.